The following is a 361-amino-acid chain: GTPase Obg (361 aa).

Residues Met1 to Leu159 form the Obg domain. The region spanning Ala160–Lys334 is the OBG-type G domain. Residues Gly166–Ser173, Phe191–His195, Asp213–Gly216, Asn284–Asp287, and Ser315–Leu317 each bind GTP. Residues Ser173 and Thr193 each contribute to the Mg(2+) site. The segment at Ser339–Pro361 is disordered. Positions Val351 to Pro361 are enriched in pro residues.

It belongs to the TRAFAC class OBG-HflX-like GTPase superfamily. OBG GTPase family. In terms of assembly, monomer. It depends on Mg(2+) as a cofactor.

It localises to the cytoplasm. Its function is as follows. An essential GTPase which binds GTP, GDP and possibly (p)ppGpp with moderate affinity, with high nucleotide exchange rates and a fairly low GTP hydrolysis rate. Plays a role in control of the cell cycle, stress response, ribosome biogenesis and in those bacteria that undergo differentiation, in morphogenesis control. The chain is GTPase Obg from Polaromonas sp. (strain JS666 / ATCC BAA-500).